We begin with the raw amino-acid sequence, 436 residues long: Transcription factor Sox-10 (436 aa).

5 disordered regions span residues 1–55 (MSDD…ERFP), 145–183 (RLRM…AEGG), 195–257 (HLDH…DFGN), 322–346 (PQTD…QPST), and 413–436 (SPSV…LSRP). Lysine 44 is covalently cross-linked (Glycyl lysine isopeptide (Lys-Gly) (interchain with G-Cter in SUMO)). The dimerization (DIM) stretch occupies residues 48–88 (DSEDERFPVCIREAVSQVLSGYDWTLVPMPVRVNGGSKSKP). The HMG box DNA-binding region spans 90-158 (VKRPMNAFMV…QHKKDHPDYK (69 aa)). Positions 145-159 (RLRMQHKKDHPDYKY) are enriched in basic and acidic residues. Composition is skewed to polar residues over residues 205-215 (SDGNSEHSAGQ) and 331-346 (KTES…QPST). Positions 209–295 (SEHSAGQSHG…NGHAGHPSHI (87 aa)) are transactivation domain (TAM). Positions 327–436 (KAQVKTESSS…QPVYTTLSRP (110 aa)) are transactivation domain (TAC). Lysine 331 participates in a covalent cross-link: Glycyl lysine isopeptide (Lys-Gly) (interchain with G-Cter in SUMO).

Interacts with the sumoylation factors ube2i/ubc9 and sumo1. Sumoylated.

It is found in the cytoplasm. Its subcellular location is the nucleus. In terms of biological role, acts early in neural crest formation, functioning redundantly with the other group E Sox factors sox8 and sox9 to induce neural crest progenitors. Acts downstream of wnt-signaling at the neural plate border. Involved in the specification of neural crest progenitors fated to form the pigment cell lineage. This is Transcription factor Sox-10 from Xenopus tropicalis (Western clawed frog).